A 185-amino-acid polypeptide reads, in one-letter code: Probable E3 ubiquitin-protein ligase ATL44 (185 aa).

A helical membrane pass occupies residues 29-49 (VVILSALLCALICVAGLAAVV). Residues 102 to 144 (CAICLTDFADGEEIRVLPLCGHSFHVECIDKWLVSRSSCPSCR) form an RING-type; atypical zinc finger. The tract at residues 163-185 (MKDQAHRHQHHQHSSTTIPTFLP) is disordered. The segment covering 176–185 (SSTTIPTFLP) has biased composition (polar residues).

This sequence belongs to the RING-type zinc finger family. ATL subfamily. As to quaternary structure, interacts with BIK1. Post-translationally, auto-monoubiquitination. In terms of tissue distribution, expressed in stems, flowers and green siliques.

It localises to the membrane. The catalysed reaction is S-ubiquitinyl-[E2 ubiquitin-conjugating enzyme]-L-cysteine + [acceptor protein]-L-lysine = [E2 ubiquitin-conjugating enzyme]-L-cysteine + N(6)-ubiquitinyl-[acceptor protein]-L-lysine.. Its pathway is protein modification; protein ubiquitination. In terms of biological role, E3 ubiquitin-protein ligase that possess E3 ubiquitin ligase activity in vitro and mediates protein monoubiquitination. Triggers the monoubiquitination of phosphorylated BIK1 in response to pathogen-associated molecular pattern (PAMP) detection. The chain is Probable E3 ubiquitin-protein ligase ATL44 from Arabidopsis thaliana (Mouse-ear cress).